The chain runs to 311 residues: Cytosolic Fe-S cluster assembly factor Nubp1 homolog (311 aa).

Positions 9, 23, 26, and 32 each coordinate [4Fe-4S] cluster. Position 63–70 (63–70 (GKGGVGKS)) interacts with ATP. 2 residues coordinate [4Fe-4S] cluster: Cys-240 and Cys-243.

The protein belongs to the Mrp/NBP35 ATP-binding proteins family. NUBP1/NBP35 subfamily. As to quaternary structure, heterotetramer of 2 Nubp1 and 2 Nubp2 chains. The cofactor is [4Fe-4S] cluster.

It is found in the cytoplasm. Component of the cytosolic iron-sulfur (Fe/S) protein assembly (CIA) machinery. Required for maturation of extramitochondrial Fe-S proteins. The Nubp1-Nubp2 heterotetramer forms a Fe-S scaffold complex, mediating the de novo assembly of an Fe-S cluster and its transfer to target apoproteins. The sequence is that of Cytosolic Fe-S cluster assembly factor Nubp1 homolog from Drosophila erecta (Fruit fly).